A 212-amino-acid chain; its full sequence is ATP phosphoribosyltransferase (212 aa).

It belongs to the ATP phosphoribosyltransferase family. Short subfamily. In terms of assembly, heteromultimer composed of HisG and HisZ subunits.

It is found in the cytoplasm. It carries out the reaction 1-(5-phospho-beta-D-ribosyl)-ATP + diphosphate = 5-phospho-alpha-D-ribose 1-diphosphate + ATP. It participates in amino-acid biosynthesis; L-histidine biosynthesis; L-histidine from 5-phospho-alpha-D-ribose 1-diphosphate: step 1/9. Functionally, catalyzes the condensation of ATP and 5-phosphoribose 1-diphosphate to form N'-(5'-phosphoribosyl)-ATP (PR-ATP). Has a crucial role in the pathway because the rate of histidine biosynthesis seems to be controlled primarily by regulation of HisG enzymatic activity. The protein is ATP phosphoribosyltransferase of Citrifermentans bemidjiense (strain ATCC BAA-1014 / DSM 16622 / JCM 12645 / Bem) (Geobacter bemidjiensis).